Reading from the N-terminus, the 298-residue chain is Nucleotide-binding protein GTNG_3015 (298 aa).

ATP is bound at residue 17–24 (GMSGAGKT). Residue 68–71 (DLRS) participates in GTP binding.

Belongs to the RapZ-like family.

Its function is as follows. Displays ATPase and GTPase activities. The sequence is that of Nucleotide-binding protein GTNG_3015 from Geobacillus thermodenitrificans (strain NG80-2).